Reading from the N-terminus, the 397-residue chain is Acetate kinase (397 aa).

N7 is a binding site for Mg(2+). K14 provides a ligand contact to ATP. R90 lines the substrate pocket. D147 (proton donor/acceptor) is an active-site residue. ATP contacts are provided by residues H207–G211, D282–R284, and G330–N334. E383 is a binding site for Mg(2+).

It belongs to the acetokinase family. Homodimer. It depends on Mg(2+) as a cofactor. The cofactor is Mn(2+).

It is found in the cytoplasm. It carries out the reaction acetate + ATP = acetyl phosphate + ADP. It functions in the pathway metabolic intermediate biosynthesis; acetyl-CoA biosynthesis; acetyl-CoA from acetate: step 1/2. In terms of biological role, catalyzes the formation of acetyl phosphate from acetate and ATP. Can also catalyze the reverse reaction. The chain is Acetate kinase from Clostridium botulinum (strain Okra / Type B1).